We begin with the raw amino-acid sequence, 365 residues long: Aminomethyltransferase (365 aa).

It belongs to the GcvT family. In terms of assembly, the glycine cleavage system is composed of four proteins: P, T, L and H.

It catalyses the reaction N(6)-[(R)-S(8)-aminomethyldihydrolipoyl]-L-lysyl-[protein] + (6S)-5,6,7,8-tetrahydrofolate = N(6)-[(R)-dihydrolipoyl]-L-lysyl-[protein] + (6R)-5,10-methylene-5,6,7,8-tetrahydrofolate + NH4(+). Its function is as follows. The glycine cleavage system catalyzes the degradation of glycine. The sequence is that of Aminomethyltransferase from Geobacillus thermodenitrificans (strain NG80-2).